The primary structure comprises 1079 residues: Adhesion G-protein coupled receptor F3 (1079 aa).

A signal peptide spans 1-25; that stretch reads MVCSAAPLLLLATTLPLLGSPVAQA. The Extracellular portion of the chain corresponds to 26 to 775; it reads SQPVSETGVR…EEPALALLTQ (750 aa). Residues Asn188, Asn264, Asn301, Asn382, Asn441, and Asn648 are each glycosylated (N-linked (GlcNAc...) asparagine). Positions 599 to 765 constitute a GAIN-B domain; it reads HPFAFSLPNV…SVLMSPHTVP (167 aa). 2 disulfide bridges follow: Cys715/Cys747 and Cys734/Cys749. Residues 715-765 are GPS; it reads CVFWDHSLFQGRGGWSKEGCQAQVASASPTAQCLCQHLTAFSVLMSPHTVP. The helical transmembrane segment at 776–796 threads the bilayer; that stretch reads VGLGASILALLVCLGVYWLVW. Residues 797-811 lie on the Cytoplasmic side of the membrane; that stretch reads RVVVRNKISYFRHAA. A helical transmembrane segment spans residues 812 to 832; it reads LLNMVFCLLAADTCFLGAPFL. At 833-851 the chain is on the extracellular side; the sequence is SPGPRSPLCLAAAFLCHFL. Residues 852-874 traverse the membrane as a helical segment; the sequence is YLATFFWMLAQALVLAHQLLFVF. Residues 875 to 881 lie on the Cytoplasmic side of the membrane; sequence HQLAKHR. Residues 882–902 traverse the membrane as a helical segment; it reads VLPLMVLLGYLCPLGLAGVTL. The Extracellular segment spans residues 903–928; that stretch reads GLYLPQGQYLREGECWLDGKGGALYT. The helical transmembrane segment at 929 to 949 threads the bilayer; that stretch reads FVGPVLAIIGVNGLVLAMAML. Residues 950–973 lie on the Cytoplasmic side of the membrane; the sequence is KLLRPSLSEGPPAEKRQALLGVIK. Residues 974 to 994 form a helical membrane-spanning segment; sequence ALLILTPIFGLTWGLGLATLL. At 995-1002 the chain is on the extracellular side; the sequence is EEVSTVPH. The helical transmembrane segment at 1003-1023 threads the bilayer; sequence YIFTILNTLQGVFILLFGCLM. The Cytoplasmic segment spans residues 1024–1079; that stretch reads DRKIQEALRKRFCRAQAPSSTISLVSCCLQILSCASKSMSEGIPWPSSEDMGTARS.

It belongs to the G-protein coupled receptor 2 family. Adhesion G-protein coupled receptor (ADGR) subfamily. As to quaternary structure, heterodimer of 2 chains generated by proteolytic processing; the large extracellular N-terminal fragment and the membrane-bound C-terminal fragment predominantly remain associated and non-covalently linked. In terms of processing, autoproteolytically processed at the GPS region of the GAIN-B domain; this cleavage modulates receptor activity.

The protein resides in the membrane. Orphan receptor. The sequence is that of Adhesion G-protein coupled receptor F3 (ADGRF3) from Homo sapiens (Human).